The chain runs to 205 residues: Large ribosomal subunit protein uL4 (205 aa).

It belongs to the universal ribosomal protein uL4 family. As to quaternary structure, part of the 50S ribosomal subunit.

Its function is as follows. One of the primary rRNA binding proteins, this protein initially binds near the 5'-end of the 23S rRNA. It is important during the early stages of 50S assembly. It makes multiple contacts with different domains of the 23S rRNA in the assembled 50S subunit and ribosome. Forms part of the polypeptide exit tunnel. The chain is Large ribosomal subunit protein uL4 from Ruegeria sp. (strain TM1040) (Silicibacter sp.).